A 390-amino-acid chain; its full sequence is RNA-binding motif protein, X chromosome (390 aa).

M1 is subject to N-acetylmethionine; in Heterogeneous nuclear ribonucleoprotein G; alternate. V2 carries the post-translational modification N-acetylvaline; in Heterogeneous nuclear ribonucleoprotein G, N-terminally processed. The RRM domain occupies 8 to 86 (GKLFIGGLNT…KAIKVEQATK (79 aa)). Residue K22 forms a Glycyl lysine isopeptide (Lys-Gly) (interchain with G-Cter in SUMO2) linkage. K30 carries the N6-acetyllysine modification. Positions 58–390 (SPADAKDAAR…RSDRGGRSRY (333 aa)) are disordered. Over residues 60–80 (ADAKDAARDMNGKSLDGKAIK) the composition is skewed to basic and acidic residues. Glycyl lysine isopeptide (Lys-Gly) (interchain with G-Cter in SUMO2) cross-links involve residues K80 and K86. Phosphoserine is present on residues S88 and S91. Positions 109–120 (LRGGRGGSGGTR) are enriched in gly residues. An omega-N-methylarginine mark is found at R125, R144, and R164. Over residues 151-164 (RGPPPRSGGPPPKR) the composition is skewed to pro residues. S165 carries the post-translational modification Phosphoserine. At R172 the chain carries Omega-N-methylarginine. S174 is modified (phosphoserine). 2 stretches are compositionally biased toward basic and acidic residues: residues 194 to 215 (PRRE…DGYS) and 241 to 274 (YTYR…DYSD). S261, S329, S330, and S332 each carry phosphoserine. Over residues 323-337 (SRDSYTSSRSDLYSS) the composition is skewed to low complexity. The span at 338–347 (GRDRVGRQER) shows a compositional bias: basic and acidic residues. A Phosphoserine modification is found at S352. The span at 362–371 (DSYSSSSRGA) shows a compositional bias: low complexity. A compositionally biased stretch (basic and acidic residues) spans 380 to 390 (SRSDRGGRSRY).

As to quaternary structure, homomultimer. Found in the supraspliceosome complex Identified in the spliceosome C complex. Interacts with KHDRBS3. Forms a complex with ILF2, ILF3, YLPM1, KHDRBS1, NCOA5 and PPP1CA. Interacts with SAFB/SAFB1. Interacts with ERAP1; the interaction is RNA-independent. Interacts with CLK2, KHDRBS2, SAFB, TRA2B and YTHDC1. Interacts with PPIA/CYPA. In terms of processing, O-glycosylated. Arg-182 is dimethylated, probably to asymmetric dimethylarginine. In terms of tissue distribution, expressed in brain, spleen, lung, liver, kidney, testis and heart. Weakly expressed in skeletal muscle (at protein level).

The protein localises to the nucleus. Its function is as follows. RNA-binding protein that plays several role in the regulation of pre- and post-transcriptional processes. Implicated in tissue-specific regulation of gene transcription and alternative splicing of several pre-mRNAs. Binds to and stimulates transcription from the tumor suppressor TXNIP gene promoter; may thus be involved in tumor suppression. When associated with SAFB, binds to and stimulates transcription from the SREBF1 promoter. Associates with nascent mRNAs transcribed by RNA polymerase II. Component of the supraspliceosome complex that regulates pre-mRNA alternative splice site selection. Can either activate or suppress exon inclusion; acts additively with TRA2B to promote exon 7 inclusion of the survival motor neuron SMN. Represses the splicing of MAPT/Tau exon 10. Binds preferentially to single-stranded 5'-CC[A/C]-rich RNA sequence motifs localized in a single-stranded conformation; probably binds RNA as a homodimer. Binds non-specifically to pre-mRNAs. Also plays a role in the cytoplasmic TNFR1 trafficking pathways; promotes both the IL-1-beta-mediated inducible proteolytic cleavage of TNFR1 ectodomains and the release of TNFR1 exosome-like vesicles to the extracellular compartment. In Rattus norvegicus (Rat), this protein is RNA-binding motif protein, X chromosome (Rbmx).